A 211-amino-acid chain; its full sequence is Leucyl/phenylalanyl-tRNA--protein transferase (211 aa).

Belongs to the L/F-transferase family.

The protein localises to the cytoplasm. It catalyses the reaction N-terminal L-lysyl-[protein] + L-leucyl-tRNA(Leu) = N-terminal L-leucyl-L-lysyl-[protein] + tRNA(Leu) + H(+). The catalysed reaction is N-terminal L-arginyl-[protein] + L-leucyl-tRNA(Leu) = N-terminal L-leucyl-L-arginyl-[protein] + tRNA(Leu) + H(+). The enzyme catalyses L-phenylalanyl-tRNA(Phe) + an N-terminal L-alpha-aminoacyl-[protein] = an N-terminal L-phenylalanyl-L-alpha-aminoacyl-[protein] + tRNA(Phe). Functions in the N-end rule pathway of protein degradation where it conjugates Leu, Phe and, less efficiently, Met from aminoacyl-tRNAs to the N-termini of proteins containing an N-terminal arginine or lysine. This chain is Leucyl/phenylalanyl-tRNA--protein transferase, found in Flavobacterium psychrophilum (strain ATCC 49511 / DSM 21280 / CIP 103535 / JIP02/86).